Here is a 128-residue protein sequence, read N- to C-terminus: Large ribosomal subunit protein eL22 (128 aa).

Phosphothreonine is present on T62. At S66 the chain carries Phosphoserine. The residue at position 69 (K69) is an N6-succinyllysine.

Belongs to the eukaryotic ribosomal protein eL22 family. Component of the large ribosomal subunit.

Its subcellular location is the cytoplasm. In terms of biological role, component of the large ribosomal subunit. The ribosome is a large ribonucleoprotein complex responsible for the synthesis of proteins in the cell. The sequence is that of Large ribosomal subunit protein eL22 (Rpl22) from Rattus norvegicus (Rat).